Reading from the N-terminus, the 156-residue chain is Lipoprotein signal peptidase (156 aa).

3 helical membrane-spanning segments follow: residues 37–57 (VIPG…FGFL), 68–88 (FFVV…KSAE), and 95–115 (ILGL…RILY). Catalysis depends on residues aspartate 120 and aspartate 138. The helical transmembrane segment at 133–153 (AFNVADIAICLGAFAMIVSFY) threads the bilayer.

It belongs to the peptidase A8 family.

It is found in the cell inner membrane. It catalyses the reaction Release of signal peptides from bacterial membrane prolipoproteins. Hydrolyzes -Xaa-Yaa-Zaa-|-(S,diacylglyceryl)Cys-, in which Xaa is hydrophobic (preferably Leu), and Yaa (Ala or Ser) and Zaa (Gly or Ala) have small, neutral side chains.. It participates in protein modification; lipoprotein biosynthesis (signal peptide cleavage). Its function is as follows. This protein specifically catalyzes the removal of signal peptides from prolipoproteins. This chain is Lipoprotein signal peptidase, found in Maridesulfovibrio salexigens (strain ATCC 14822 / DSM 2638 / NCIMB 8403 / VKM B-1763) (Desulfovibrio salexigens).